The primary structure comprises 502 residues: Glycerate kinase (502 aa).

Belongs to the glycerate kinase type-2 family.

It localises to the cytoplasm. The catalysed reaction is (R)-glycerate + ATP = (2R)-3-phosphoglycerate + ADP + H(+). This chain is Glycerate kinase (glyctk), found in Danio rerio (Zebrafish).